Consider the following 341-residue polypeptide: Ribonucleoside-diphosphate reductase small chain A (341 aa).

The disordered stretch occupies residues 1-20 (MGSLKEGQGRDMEEGESEEP). 3 residues coordinate Fe cation: Asp-87, Glu-118, and His-121. Tyr-125 is an active-site residue. Fe cation contacts are provided by Glu-180, Glu-214, and His-217.

This sequence belongs to the ribonucleoside diphosphate reductase small chain family. As to quaternary structure, homodimer and heterodimer with TSO2. Heterotetramer of two R1 and two R2 chains. A radical transfer pathway may occur between Tyr-125 of protein R2 and R1. Homodimer contains a dinuclear non-heme iron center and a stable tyrosyl radical essential for activity. A transfer pathway may occur between Tyr-125 of protein R2 and R1. Interacts with CSN7. Requires Fe cation as cofactor. As to expression, expressed in rosette leaves, cauline leaves, stems and flowers.

The protein resides in the cytoplasm. The enzyme catalyses a 2'-deoxyribonucleoside 5'-diphosphate + [thioredoxin]-disulfide + H2O = a ribonucleoside 5'-diphosphate + [thioredoxin]-dithiol. Inhibited by phenol, paracetamol, 2,4,6-trimethylphenol, resveratrol, furfuryl mercaptan, 2-thiophenthiol, phenylhydrazine, and hydroxyurea. Functionally, provides the precursors necessary for DNA synthesis. Catalyzes the biosynthesis of deoxyribonucleotides from the corresponding ribonucleotides. The sequence is that of Ribonucleoside-diphosphate reductase small chain A (RNR2A) from Arabidopsis thaliana (Mouse-ear cress).